The following is a 426-amino-acid chain: Bifunctional protein GlmU (426 aa).

The pyrophosphorylase stretch occupies residues 1–216; that stretch reads MSEVDVVILA…WHDILGVNTQ (216 aa). Residues 9–12, K23, and Q69 contribute to the UDP-N-acetyl-alpha-D-glucosamine site; that span reads LAAG. D97 lines the Mg(2+) pocket. UDP-N-acetyl-alpha-D-glucosamine contacts are provided by G132, E148, N163, and N214. A Mg(2+)-binding site is contributed by N214. The interval 217–237 is linker; sequence QQLAAVSKIARKRINDQIMAN. The N-acetyltransferase stretch occupies residues 238–426; the sequence is GVTMIDPLTT…AKHDQRDDQP (189 aa). UDP-N-acetyl-alpha-D-glucosamine is bound by residues R286 and K304. H316 serves as the catalytic Proton acceptor. UDP-N-acetyl-alpha-D-glucosamine-binding residues include Y319 and N330. Residues A333, 339 to 340, S358, A376, and R393 contribute to the acetyl-CoA site; that span reads NY.

This sequence in the N-terminal section; belongs to the N-acetylglucosamine-1-phosphate uridyltransferase family. In the C-terminal section; belongs to the transferase hexapeptide repeat family. As to quaternary structure, homotrimer. The cofactor is Mg(2+).

It is found in the cytoplasm. It carries out the reaction alpha-D-glucosamine 1-phosphate + acetyl-CoA = N-acetyl-alpha-D-glucosamine 1-phosphate + CoA + H(+). It catalyses the reaction N-acetyl-alpha-D-glucosamine 1-phosphate + UTP + H(+) = UDP-N-acetyl-alpha-D-glucosamine + diphosphate. Its pathway is nucleotide-sugar biosynthesis; UDP-N-acetyl-alpha-D-glucosamine biosynthesis; N-acetyl-alpha-D-glucosamine 1-phosphate from alpha-D-glucosamine 6-phosphate (route II): step 2/2. It functions in the pathway nucleotide-sugar biosynthesis; UDP-N-acetyl-alpha-D-glucosamine biosynthesis; UDP-N-acetyl-alpha-D-glucosamine from N-acetyl-alpha-D-glucosamine 1-phosphate: step 1/1. The protein operates within bacterial outer membrane biogenesis; LPS lipid A biosynthesis. In terms of biological role, catalyzes the last two sequential reactions in the de novo biosynthetic pathway for UDP-N-acetylglucosamine (UDP-GlcNAc). The C-terminal domain catalyzes the transfer of acetyl group from acetyl coenzyme A to glucosamine-1-phosphate (GlcN-1-P) to produce N-acetylglucosamine-1-phosphate (GlcNAc-1-P), which is converted into UDP-GlcNAc by the transfer of uridine 5-monophosphate (from uridine 5-triphosphate), a reaction catalyzed by the N-terminal domain. This Oenococcus oeni (strain ATCC BAA-331 / PSU-1) protein is Bifunctional protein GlmU.